The primary structure comprises 219 residues: 2-hydroxy-3-keto-5-methylthiopentenyl-1-phosphate phosphatase (219 aa).

Belongs to the HAD-like hydrolase superfamily. MtnX family.

The enzyme catalyses 2-hydroxy-5-methylsulfanyl-3-oxopent-1-enyl phosphate + H2O = 1,2-dihydroxy-5-(methylsulfanyl)pent-1-en-3-one + phosphate. Its pathway is amino-acid biosynthesis; L-methionine biosynthesis via salvage pathway; L-methionine from S-methyl-5-thio-alpha-D-ribose 1-phosphate: step 4/6. In terms of biological role, dephosphorylates 2-hydroxy-3-keto-5-methylthiopentenyl-1-phosphate (HK-MTPenyl-1-P) yielding 1,2-dihydroxy-3-keto-5-methylthiopentene (DHK-MTPene). This is 2-hydroxy-3-keto-5-methylthiopentenyl-1-phosphate phosphatase from Bacillus cereus (strain 03BB102).